A 186-amino-acid chain; its full sequence is Peptide deformylase (186 aa).

Fe cation contacts are provided by Cys-113 and His-156. Glu-157 is a catalytic residue. Residue His-160 participates in Fe cation binding.

The protein belongs to the polypeptide deformylase family. The cofactor is Fe(2+).

It catalyses the reaction N-terminal N-formyl-L-methionyl-[peptide] + H2O = N-terminal L-methionyl-[peptide] + formate. Removes the formyl group from the N-terminal Met of newly synthesized proteins. Requires at least a dipeptide for an efficient rate of reaction. N-terminal L-methionine is a prerequisite for activity but the enzyme has broad specificity at other positions. The chain is Peptide deformylase from Lactiplantibacillus plantarum (strain ATCC BAA-793 / NCIMB 8826 / WCFS1) (Lactobacillus plantarum).